Consider the following 802-residue polypeptide: MTRFACFLFSTLLLSFSYAAITPTSPLSIGQTLSSPNGIFELGFFSPNNSRNLYVGIWFKGIIPRTVVWVANRENSVTDATADLAISSNGSLLLFDGKHSTVWSTGETFASNGSSAELSDSGNLLVIDKVSGITLWQSFEHLGDTMLPYSSLMYNPGTGEKRVLSSWKSYTDPLPGEFVGYITTQVPPQGFIMRGSKPYWRSGPWAKTRFTGVPLTDESYTHPFSVQQDANGSVYFSHLQRNFKRSLLVLTSEGSLKVTHHNGTDWVLNIDVPANTCDFYGVCGPFGLCVMSIPPKCKCFKGFVPQFSEEWKRGNWTGGCVRRTELLCQGNSTGRHVNVFHPVANIKPPDFYEFVSSGSAEECYQSCLHNCSCLAFAYINGIGCLIWNQELMDVMQFSVGGELLSIRLASSEMGGNQRKKTIIASIVSISLFVTLASAAFGFWRYRLKHNAIVSKVSLQGAWRNDLKSEDVSGLYFFEMKTIEIATNNFSLVNKLGQGGFGPVYKGKLQDGKEIAVKRLSSSSGQGKEEFMNEILLISKLQHINLVRILGCCIEGEERLLVYEFMVNKSLDTFIFDSRKRVEIDWPKRFSIIQGIARGLLYLHRDSRLRIIHRDVKVSNILLDDKMNPKISDFGLARMYEGTKYQDNTRRIVGTLGYMSPEYAWTGVFSEKSDTYSFGVLLLEVISGEKISRFSYDKERKNLLAYAWESWCENGGVGFLDKDATDSCHPSEVGRCVQIGLLCVQHQPADRPNTLELLSMLTTTSDLPLPKEPTFAVHTSDDGSRTSDLITVNEVTQSVVLGR.

The N-terminal stretch at M1–A19 is a signal peptide. The 120-residue stretch at A20–F139 folds into the Bulb-type lectin domain. The Extracellular portion of the chain corresponds to A20–T421. Residues N48, N89, N112, N231, and N262 are each glycosylated (N-linked (GlcNAc...) asparagine). In terms of domain architecture, EGF-like spans P273–E309. 2 disulfides stabilise this stretch: C277–C289 and C283–C297. 3 N-linked (GlcNAc...) asparagine glycosylation sites follow: N315, N331, and N370. One can recognise a PAN domain in the interval C328–S410. Cystine bridges form between C363–C384 and C367–C373. Residues I422–F442 traverse the membrane as a helical segment. The Cytoplasmic segment spans residues W443–R802. The Protein kinase domain maps to F489 to F774. ATP is bound by residues L495–V503 and K517. Residues S523 and S538 each carry the phosphoserine modification. Residues R578–I595 are caM-binding. The Proton acceptor role is filled by D614. Phosphoserine is present on residues S618 and S631. T648 bears the Phosphothreonine mark. A Phosphoserine modification is found at S691.

The protein belongs to the protein kinase superfamily. Ser/Thr protein kinase family.

The protein resides in the cell membrane. The catalysed reaction is L-seryl-[protein] + ATP = O-phospho-L-seryl-[protein] + ADP + H(+). The enzyme catalyses L-threonyl-[protein] + ATP = O-phospho-L-threonyl-[protein] + ADP + H(+). The sequence is that of G-type lectin S-receptor-like serine/threonine-protein kinase At1g61550 from Arabidopsis thaliana (Mouse-ear cress).